Consider the following 415-residue polypeptide: Serine hydroxymethyltransferase (415 aa).

(6S)-5,6,7,8-tetrahydrofolate is bound by residues L120 and 124 to 126; that span reads GHL. K229 is modified (N6-(pyridoxal phosphate)lysine).

It belongs to the SHMT family. Homodimer. Pyridoxal 5'-phosphate serves as cofactor.

The protein resides in the cytoplasm. The enzyme catalyses (6R)-5,10-methylene-5,6,7,8-tetrahydrofolate + glycine + H2O = (6S)-5,6,7,8-tetrahydrofolate + L-serine. Its pathway is one-carbon metabolism; tetrahydrofolate interconversion. It functions in the pathway amino-acid biosynthesis; glycine biosynthesis; glycine from L-serine: step 1/1. Functionally, catalyzes the reversible interconversion of serine and glycine with tetrahydrofolate (THF) serving as the one-carbon carrier. This reaction serves as the major source of one-carbon groups required for the biosynthesis of purines, thymidylate, methionine, and other important biomolecules. Also exhibits THF-independent aldolase activity toward beta-hydroxyamino acids, producing glycine and aldehydes, via a retro-aldol mechanism. The sequence is that of Serine hydroxymethyltransferase from Desulforudis audaxviator (strain MP104C).